A 402-amino-acid polypeptide reads, in one-letter code: Ferrochelatase, mitochondrial (402 aa).

The N-terminal 33 residues, 1 to 33 (MAAAGRAARPLVAGGRQLRVPLRWRGQVAAAAP), are a transit peptide targeting the mitochondrion. Arginine 94, tyrosine 102, and serine 109 together coordinate protoporphyrin IX. Cysteine 175 is a [2Fe-2S] cluster binding site. Active-site residues include histidine 209 and aspartate 362. [2Fe-2S] cluster contacts are provided by cysteine 382, cysteine 385, and cysteine 390.

It belongs to the ferrochelatase family. As to quaternary structure, homodimer. Homotetramer. The cofactor is [2Fe-2S] cluster.

It localises to the mitochondrion inner membrane. The enzyme catalyses heme b + 2 H(+) = protoporphyrin IX + Fe(2+). Its pathway is porphyrin-containing compound metabolism; protoheme biosynthesis; protoheme from protoporphyrin-IX: step 1/1. Catalyzes the ferrous insertion into protoporphyrin IX. This is Ferrochelatase, mitochondrial from Gallus gallus (Chicken).